The chain runs to 474 residues: Dihydrolipoyl dehydrogenase (474 aa).

Residues 36–44 (EAKDMGGTC), K53, and G119 contribute to the FAD site. C44 and C49 are joined by a disulfide. NAD(+)-binding positions include 184-188 (GSGYI), E207, and 275-278 (ATGR). Residues D323 and A331 each contribute to the FAD site. The Proton acceptor role is filled by H459.

This sequence belongs to the class-I pyridine nucleotide-disulfide oxidoreductase family. In terms of assembly, homodimer. Requires FAD as cofactor.

The protein localises to the cell inner membrane. The catalysed reaction is N(6)-[(R)-dihydrolipoyl]-L-lysyl-[protein] + NAD(+) = N(6)-[(R)-lipoyl]-L-lysyl-[protein] + NADH + H(+). Lipoamide dehydrogenase is a component of the alpha-ketoacid dehydrogenase complexes. In Synechocystis sp. (strain ATCC 27184 / PCC 6803 / Kazusa), this protein is Dihydrolipoyl dehydrogenase (lpdA).